We begin with the raw amino-acid sequence, 486 residues long: Zinc metalloproteinase-disintegrin VMP-II (486 aa).

An N-terminal signal peptide occupies residues 1–20 (MIQVLLVTICLAVFPYQGSS). A propeptide spanning residues 21 to 190 (IILESGNVND…KASQSNLPPE (170 aa)) is cleaved from the precursor. Gln191 bears the Pyrrolidone carboxylic acid mark. Residues 197–394 (RYIELVVVAD…HYTTCLYNEP (198 aa)) enclose the Peptidase M12B domain. 2 residues coordinate Ca(2+): Glu200 and Asp284. 3 disulfide bridges follow: Cys308-Cys389, Cys348-Cys372, and Cys350-Cys355. Residue His333 participates in Zn(2+) binding. Glu334 is an active-site residue. 2 residues coordinate Zn(2+): His337 and His343. 2 residues coordinate Ca(2+): Cys389 and Asn392. Residues 402-486 (PPVCGNYYTE…AECPNKGYYG (85 aa)) enclose the Disintegrin domain. 7 disulfides stabilise this stretch: Cys405–Cys424, Cys416–Cys434, Cys418–Cys429, Cys428–Cys451, Cys442–Cys448, Cys447–Cys472, and Cys460–Cys479. The short motif at 464-466 (RGD) is the Cell attachment site element.

It belongs to the venom metalloproteinase (M12B) family. P-II subfamily. P-IIb sub-subfamily. As to quaternary structure, monomer. The cofactor is Zn(2+). In terms of tissue distribution, expressed by the venom gland.

It is found in the secreted. In terms of biological role, snake venom zinc metalloproteinase that inhibits ADP-induced platelet aggregation (probably by binding integrin alpha-IIb/beta-3 (ITGA2B/ITGB3)) and degrades fibrinogen. This Crotalus atrox (Western diamondback rattlesnake) protein is Zinc metalloproteinase-disintegrin VMP-II.